Here is a 98-residue protein sequence, read N- to C-terminus: Alpha-elicitin hibernalin (98 aa).

3 disulfide bridges follow: Cys-3/Cys-71, Cys-27/Cys-56, and Cys-51/Cys-95.

Its subcellular location is the secreted. In terms of biological role, induces local and distal defense responses (incompatible hypersensitive reaction) in plants from the solanaceae and cruciferae families. Elicits leaf necrosis and causes the accumulation of pathogenesis-related proteins. Might interact with the lipidic molecules of the plasma membrane. This chain is Alpha-elicitin hibernalin, found in Phytophthora hibernalis.